Reading from the N-terminus, the 464-residue chain is tRNA modification GTPase MnmE (464 aa).

(6S)-5-formyl-5,6,7,8-tetrahydrofolate is bound by residues arginine 27, glutamate 89, and arginine 128. Residues glycine 225–phenylalanine 384 form the TrmE-type G domain. Asparagine 235 serves as a coordination point for K(+). GTP contacts are provided by residues asparagine 235–serine 240, threonine 254–threonine 260, and aspartate 279–glycine 282. Serine 239 serves as a coordination point for Mg(2+). K(+)-binding residues include threonine 254, valine 256, and threonine 259. A Mg(2+)-binding site is contributed by threonine 260. Lysine 464 provides a ligand contact to (6S)-5-formyl-5,6,7,8-tetrahydrofolate.

It belongs to the TRAFAC class TrmE-Era-EngA-EngB-Septin-like GTPase superfamily. TrmE GTPase family. In terms of assembly, homodimer. Heterotetramer of two MnmE and two MnmG subunits. The cofactor is K(+).

The protein localises to the cytoplasm. Exhibits a very high intrinsic GTPase hydrolysis rate. Involved in the addition of a carboxymethylaminomethyl (cmnm) group at the wobble position (U34) of certain tRNAs, forming tRNA-cmnm(5)s(2)U34. This Levilactobacillus brevis (strain ATCC 367 / BCRC 12310 / CIP 105137 / JCM 1170 / LMG 11437 / NCIMB 947 / NCTC 947) (Lactobacillus brevis) protein is tRNA modification GTPase MnmE.